The chain runs to 206 residues: Small ribosomal subunit protein uS4 (206 aa).

The region spanning 96 to 158 (GRLDNVVYRM…AKQQSRIKAA (63 aa)) is the S4 RNA-binding domain.

The protein belongs to the universal ribosomal protein uS4 family. Part of the 30S ribosomal subunit. Contacts protein S5. The interaction surface between S4 and S5 is involved in control of translational fidelity.

In terms of biological role, one of the primary rRNA binding proteins, it binds directly to 16S rRNA where it nucleates assembly of the body of the 30S subunit. Its function is as follows. With S5 and S12 plays an important role in translational accuracy. In Aliivibrio fischeri (strain ATCC 700601 / ES114) (Vibrio fischeri), this protein is Small ribosomal subunit protein uS4.